A 167-amino-acid polypeptide reads, in one-letter code: Swarming motility protein SwrB (167 aa).

Positions 63 to 105 are disordered; the sequence is IENKASSASQSDEESQKSGLQTSETYQERDPVQEAENLPEHIE. Basic and acidic residues predominate over residues 88-105; sequence YQERDPVQEAENLPEHIE.

Its function is as follows. Required for swarming motility and for maximal sigma-D activity. The chain is Swarming motility protein SwrB (swrB) from Bacillus subtilis (strain 168).